The following is a 774-amino-acid chain: E3 ubiquitin-protein ligase UHRF1 (774 aa).

The region spanning 1–78 is the Ubiquitin-like domain; sequence MWIQVRTMDG…IQLLVRQSLA (78 aa). A phosphoserine mark is found at Ser-76, Ser-91, Ser-93, Ser-95, and Ser-161. Positions 83-120 are disordered; that stretch reads TKERDSELSDSDSGYGVGHSESDKSSTHGEGTADGDDK. Tudor-like regions lie at residues 129–205 and 212–280; these read GLYK…ARAR and DLEV…IELP. Lys-276 is covalently cross-linked (Glycyl lysine isopeptide (Lys-Gly) (interchain with G-Cter in SUMO2)). A Phosphoserine modification is found at Ser-284. Positions 293–298 are linker; it reads RKSGPS. Position 295 is a phosphoserine; by PKA (Ser-295). The PHD-type zinc finger occupies 296 to 363; the sequence is GPSCQYCKDD…EWYCPSCRTD (68 aa). Histone H3R2me0 binding stretches follow at residues 330–334 and 350–352; these read CDECD and PPE. Ser-365 bears the Phosphoserine mark. Lys-382 participates in a covalent cross-link: Glycyl lysine isopeptide (Lys-Gly) (interchain with G-Cter in SUMO2). The tract at residues 382-605 is methyl-CpG binding and interaction with HDAC1; it reads KMASATSSSR…QLGLTMQYPE (224 aa). Position 396 is an N6-acetyllysine (Lys-396). One can recognise a YDG domain in the interval 416 to 578; it reads GPIPGVPVGT…FIVWRYLLRR (163 aa). Positions 442-443 are required to promote base flipping; the sequence is HV. DNA contacts are provided by residues 460-461 and Asp-466; that span reads AG. Required for formation of a 5-methylcytosine-binding pocket regions lie at residues 463-466 and 475-478; these read YEDD and YTGS. Ser-511 carries the post-translational modification Phosphoserine. An N6-acetyllysine; alternate modification is found at Lys-542. Lys-542 is covalently cross-linked (Glycyl lysine isopeptide (Lys-Gly) (interchain with G-Cter in SUMO2); alternate). The disordered stretch occupies residues 616-657; that stretch reads KNRKRPAKALEQGPSSSKIGKSKRKSTGPATTSPRVSKKSKL. At Ser-631 the chain carries Phosphoserine; by CDK1. Phosphoserine occurs at positions 641 and 648. Lys-656 is covalently cross-linked (Glycyl lysine isopeptide (Lys-Gly) (interchain with G-Cter in SUMO2)). An RING-type zinc finger spans residues 705–744; sequence CICCQELVFRPVTTVCQHNVCKDCLDRSFRAQVFSCPACR. Ser-751 is subject to Phosphoserine.

Interacts with DNMT3A and DNMT3B. Interacts with DNMT1; the interaction is direct. Interacts with USP7; leading to its deubiquitination. Interacts with histone H3. Interacts with HDAC1, but not with HDAC2. Interacts with BLTP3A. Interacts with PML. Interacts with EHMT2. Binds methylated CpG containing oligonucleotides. Interacts with ZNF263; recruited to the SIX3 promoter along with other proteins involved in chromatin modification and transcriptional corepression where it contributes to transcriptional repression. Interacts with UHRF2. Interacts with FANCD2. Interacts with TET1 isoform 2; this interaction induces the recruitment of TET1 isoform 2 to replicating heterochromatin. Post-translationally, phosphorylation at Ser-295 of the linker region decreases the binding to H3K9me3. Phosphorylation at Ser-631 by CDK1 during M phase impairs interaction with USP7, preventing deubiquitination and leading to degradation by the proteasome. Ubiquitinated; which leads to proteasomal degradation. Autoubiquitinated; interaction with USP7 leads to deubiquitination and prevents degradation. Ubiquitination and degradation takes place during M phase, when phosphorylation at Ser-631 prevents interaction with USP7 and subsequent deubiquitination. Polyubiquitination may be stimulated by DNA damage.

The protein resides in the nucleus. It catalyses the reaction S-ubiquitinyl-[E2 ubiquitin-conjugating enzyme]-L-cysteine + [acceptor protein]-L-lysine = [E2 ubiquitin-conjugating enzyme]-L-cysteine + N(6)-ubiquitinyl-[acceptor protein]-L-lysine.. Its pathway is protein modification; protein ubiquitination. In terms of biological role, multidomain protein that acts as a key epigenetic regulator by bridging DNA methylation and chromatin modification. Specifically recognizes and binds hemimethylated DNA at replication forks via its YDG domain and recruits DNMT1 methyltransferase to ensure faithful propagation of the DNA methylation patterns through DNA replication. In addition to its role in maintenance of DNA methylation, also plays a key role in chromatin modification: through its tudor-like regions and PHD-type zinc fingers, specifically recognizes and binds histone H3 trimethylated at 'Lys-9' (H3K9me3) and unmethylated at 'Arg-2' (H3R2me0), respectively, and recruits chromatin proteins. Enriched in pericentric heterochromatin where it recruits different chromatin modifiers required for this chromatin replication. Also localizes to euchromatic regions where it negatively regulates transcription possibly by impacting DNA methylation and histone modifications. Has E3 ubiquitin-protein ligase activity by mediating the ubiquitination of target proteins such as histone H3 and PML. It is still unclear how E3 ubiquitin-protein ligase activity is related to its role in chromatin in vivo. Plays a role in DNA repair by cooperating with UHRF2 to ensure recruitment of FANCD2 to interstrand cross-links (ICLs) leading to FANCD2 activation. Plays a pivotal role in the establishment of correct spindle architecture by catalyzing the 'Lys-63'-linked ubiquitination of KIF11, thereby controlling KIF11 localization on the spindle. In Rattus norvegicus (Rat), this protein is E3 ubiquitin-protein ligase UHRF1 (Uhrf1).